The chain runs to 478 residues: Serralysin C (478 aa).

Positions 1 to 17 (MEKNLSSRDDDALHSLS) are excised as a propeptide. Residue His-187 participates in Zn(2+) binding. Glu-188 is an active-site residue. Positions 191 and 227 each coordinate Zn(2+). Residues Arg-264, Gly-266, Asp-296, Gly-298, Gly-299, Asp-301, Thr-338, Glu-340, Gly-345, Gly-347, Asp-349, Asn-354, Ala-356, Asn-358, Gly-362, Gly-363, Ala-364, Gly-365, Asp-367, Gly-371, Gly-372, Gly-374, Asp-376, Gly-380, Gly-381, Gly-383, Asp-385, Asp-394, Asp-401, and Asp-411 each coordinate Ca(2+). Hemolysin-type calcium-binding repeat units lie at residues 343-360 (IGGS…DNTL) and 361-378 (RGGA…ADRL).

Belongs to the peptidase M10B family. The cofactor is Ca(2+). Zn(2+) serves as cofactor.

It localises to the secreted. The enzyme catalyses Preferential cleavage of bonds with hydrophobic residues in P1'.. This Dickeya chrysanthemi (Pectobacterium chrysanthemi) protein is Serralysin C (prtC).